We begin with the raw amino-acid sequence, 51 residues long: Large ribosomal subunit protein eL39 (51 aa).

The protein belongs to the eukaryotic ribosomal protein eL39 family. Interacts with impact.

In Ictalurus punctatus (Channel catfish), this protein is Large ribosomal subunit protein eL39 (rpl39).